Here is a 457-residue protein sequence, read N- to C-terminus: Siroheme synthase (457 aa).

Residues 4–202 (LPIFCQLRDR…ANADEKAVNA (199 aa)) form a precorrin-2 dehydrogenase /sirohydrochlorin ferrochelatase region. NAD(+)-binding positions include 22-23 (DV) and 43-44 (LT). Serine 128 is modified (phosphoserine). The tract at residues 216 to 448 (GEVVLVGAGP…IIVGRVVALR (233 aa)) is uroporphyrinogen-III C-methyltransferase. An S-adenosyl-L-methionine-binding site is contributed by proline 225. The active-site Proton acceptor is the aspartate 248. Lysine 270 serves as the catalytic Proton donor. S-adenosyl-L-methionine contacts are provided by residues 301–303 (GGD), isoleucine 306, 331–332 (TA), methionine 382, glycine 411, and alanine 437.

This sequence in the N-terminal section; belongs to the precorrin-2 dehydrogenase / sirohydrochlorin ferrochelatase family. In the C-terminal section; belongs to the precorrin methyltransferase family. In terms of assembly, homodimer.

It catalyses the reaction uroporphyrinogen III + 2 S-adenosyl-L-methionine = precorrin-2 + 2 S-adenosyl-L-homocysteine + H(+). The catalysed reaction is precorrin-2 + NAD(+) = sirohydrochlorin + NADH + 2 H(+). It carries out the reaction siroheme + 2 H(+) = sirohydrochlorin + Fe(2+). Its pathway is cofactor biosynthesis; adenosylcobalamin biosynthesis; precorrin-2 from uroporphyrinogen III: step 1/1. It participates in cofactor biosynthesis; adenosylcobalamin biosynthesis; sirohydrochlorin from precorrin-2: step 1/1. The protein operates within porphyrin-containing compound metabolism; siroheme biosynthesis; precorrin-2 from uroporphyrinogen III: step 1/1. It functions in the pathway porphyrin-containing compound metabolism; siroheme biosynthesis; siroheme from sirohydrochlorin: step 1/1. Its pathway is porphyrin-containing compound metabolism; siroheme biosynthesis; sirohydrochlorin from precorrin-2: step 1/1. In terms of biological role, multifunctional enzyme that catalyzes the SAM-dependent methylations of uroporphyrinogen III at position C-2 and C-7 to form precorrin-2 via precorrin-1. Then it catalyzes the NAD-dependent ring dehydrogenation of precorrin-2 to yield sirohydrochlorin. Finally, it catalyzes the ferrochelation of sirohydrochlorin to yield siroheme. The sequence is that of Siroheme synthase from Salmonella typhimurium (strain LT2 / SGSC1412 / ATCC 700720).